Here is a 173-residue protein sequence, read N- to C-terminus: NADH-ubiquinone oxidoreductase chain 6 (173 aa).

The next 6 membrane-spanning stretches (helical) occupy residues 1–21 (MTYF…AVAS), 27–47 (YGVV…LSLG), 48–68 (VSFV…VVFV), 87–107 (VVGY…VGGF), 113–133 (FGVI…FGGV), and 139–159 (CGVG…FVVL).

Belongs to the complex I subunit 6 family.

The protein resides in the mitochondrion membrane. It catalyses the reaction a ubiquinone + NADH + 5 H(+)(in) = a ubiquinol + NAD(+) + 4 H(+)(out). Its function is as follows. Core subunit of the mitochondrial membrane respiratory chain NADH dehydrogenase (Complex I) that is believed to belong to the minimal assembly required for catalysis. Complex I functions in the transfer of electrons from NADH to the respiratory chain. The immediate electron acceptor for the enzyme is believed to be ubiquinone. The sequence is that of NADH-ubiquinone oxidoreductase chain 6 (MT-ND6) from Alle alle (Dovekie).